The sequence spans 286 residues: MTKADTIFKENITKIMEEGVWSEQARPKYKDGTTANSKYITGSFAEYDLSKGEFPITTLRPIAIKSAIKEVFWIYQDQTNSLDVLEDKYNVHYWNDWEVEGVPANNGDKRSIGQRYGAVVKKHDIINRLLAQLEANPWNRRNVISLWDYEAFEETAGLQPCAFQTMFDVRRVGEDVYLDGTLTQRSNDMLVAHHINAMQYVALQMMIAKHFGWKVGKFFYFINNLHIYDNQFEQAEELLKRQPSDCQPRLVLNVPDETNFFDIKPEDFELVDYDPVKPQLKFDLAI.

140 to 141 provides a ligand contact to dUMP; the sequence is RR. Catalysis depends on cysteine 161, which acts as the Nucleophile. DUMP-binding positions include 185 to 188, asparagine 196, and 226 to 228; these read RSND and HIY. Aspartate 188 contributes to the (6R)-5,10-methylene-5,6,7,8-tetrahydrofolate binding site. (6R)-5,10-methylene-5,6,7,8-tetrahydrofolate is bound at residue alanine 285.

Belongs to the thymidylate synthase family. Bacterial-type ThyA subfamily. In terms of assembly, homodimer.

It is found in the cytoplasm. The catalysed reaction is dUMP + (6R)-5,10-methylene-5,6,7,8-tetrahydrofolate = 7,8-dihydrofolate + dTMP. Its pathway is pyrimidine metabolism; dTTP biosynthesis. Catalyzes the reductive methylation of 2'-deoxyuridine-5'-monophosphate (dUMP) to 2'-deoxythymidine-5'-monophosphate (dTMP) while utilizing 5,10-methylenetetrahydrofolate (mTHF) as the methyl donor and reductant in the reaction, yielding dihydrofolate (DHF) as a by-product. This enzymatic reaction provides an intracellular de novo source of dTMP, an essential precursor for DNA biosynthesis. The protein is Thymidylate synthase of Streptococcus thermophilus (strain ATCC BAA-250 / LMG 18311).